Reading from the N-terminus, the 87-residue chain is DNA-directed RNA polymerase subunit omega (87 aa).

Belongs to the RNA polymerase subunit omega family. The RNAP catalytic core consists of 2 alpha, 1 beta, 1 beta' and 1 omega subunit. When a sigma factor is associated with the core the holoenzyme is formed, which can initiate transcription.

It carries out the reaction RNA(n) + a ribonucleoside 5'-triphosphate = RNA(n+1) + diphosphate. Promotes RNA polymerase assembly. Latches the N- and C-terminal regions of the beta' subunit thereby facilitating its interaction with the beta and alpha subunits. The polypeptide is DNA-directed RNA polymerase subunit omega (Pseudomonas entomophila (strain L48)).